The following is a 438-amino-acid chain: Transposon Ty2-LR1 Gag polyprotein (438 aa).

Composition is skewed to polar residues over residues 1–11, 19–39, and 49–60; these read MESQQLHQNPH, ASVT…SASN, and KVNSQQETTPGT. 3 disordered regions span residues 1-86, 364-397, and 419-438; these read MESQ…GQYQ, KNVS…AKAH, and SSQY…TERI. An RNA-binding region spans residues 295-397; sequence ENNINVSDRL…SSKPRAAKAH (103 aa). The segment covering 369–381 has biased composition (low complexity); that stretch reads TSPNTTNTKVTTR.

As to quaternary structure, homotrimer.

The protein localises to the cytoplasm. Functionally, capsid protein (CA) is the structural component of the virus-like particle (VLP), forming the shell that encapsulates the retrotransposons dimeric RNA genome. The particles are assembled from trimer-clustered units and there are holes in the capsid shells that allow for the diffusion of macromolecules. CA also has nucleocapsid-like chaperone activity, promoting primer tRNA(i)-Met annealing to the multipartite primer-binding site (PBS), dimerization of Ty2 RNA and initiation of reverse transcription. The protein is Transposon Ty2-LR1 Gag polyprotein (TY2A-LR1) of Saccharomyces cerevisiae (strain ATCC 204508 / S288c) (Baker's yeast).